Consider the following 325-residue polypeptide: MKPPVRVAITGAAGHVSYSLIFRIAAGHMLGKDQPVILQLLEIPQAMDVLKGVVLELEDCAFPLLHGLVCSDDVHVAFKDADYAILVGARPRGPGMERSDLIQANGPIFTTQGEALSAEANPEVKVLVVGNPANTNALILLKNAPYINPRNITAMMRLDHNRALFQVAKKMGCHCSDVEKMVVWGNHSASQFPDISYAEIAGEKVAKGVENNWHGDNLIPIIQQRGAAVIKARGASSAASAASAAIDHMRNWVLGSGGKWVSMGVYSRGNSYGLDEDIMFSLPVICEDGDWREVAGLELSSFQRAMLEATEAELQAEREAVADII.

11 to 17 (GAAGHVS) is a binding site for NAD(+). Residues R92 and R98 each contribute to the substrate site. Residues N105, Q112, and 129 to 131 (VGN) each bind NAD(+). 2 residues coordinate substrate: N131 and R162. The active-site Proton acceptor is the H187.

Belongs to the LDH/MDH superfamily. MDH type 2 family.

It catalyses the reaction (S)-malate + NAD(+) = oxaloacetate + NADH + H(+). In terms of biological role, catalyzes the reversible oxidation of malate to oxaloacetate. The polypeptide is Malate dehydrogenase (Desulfotalea psychrophila (strain LSv54 / DSM 12343)).